The following is a 243-amino-acid chain: UDP-2,3-diacylglucosamine hydrolase (243 aa).

Aspartate 9, histidine 11, aspartate 42, asparagine 79, and histidine 114 together coordinate Mn(2+). Residue 79–80 (NR) coordinates substrate. The substrate site is built by aspartate 122, serine 160, asparagine 164, and histidine 195. Positions 195 and 197 each coordinate Mn(2+).

The protein belongs to the LpxH family. Requires Mn(2+) as cofactor.

The protein localises to the cell inner membrane. It catalyses the reaction UDP-2-N,3-O-bis[(3R)-3-hydroxytetradecanoyl]-alpha-D-glucosamine + H2O = 2-N,3-O-bis[(3R)-3-hydroxytetradecanoyl]-alpha-D-glucosaminyl 1-phosphate + UMP + 2 H(+). It functions in the pathway glycolipid biosynthesis; lipid IV(A) biosynthesis; lipid IV(A) from (3R)-3-hydroxytetradecanoyl-[acyl-carrier-protein] and UDP-N-acetyl-alpha-D-glucosamine: step 4/6. Hydrolyzes the pyrophosphate bond of UDP-2,3-diacylglucosamine to yield 2,3-diacylglucosamine 1-phosphate (lipid X) and UMP by catalyzing the attack of water at the alpha-P atom. Involved in the biosynthesis of lipid A, a phosphorylated glycolipid that anchors the lipopolysaccharide to the outer membrane of the cell. In Coxiella burnetii (strain RSA 331 / Henzerling II), this protein is UDP-2,3-diacylglucosamine hydrolase.